The sequence spans 78 residues: Small ribosomal subunit protein bS16c (78 aa).

This sequence belongs to the bacterial ribosomal protein bS16 family.

It is found in the plastid. The protein resides in the chloroplast. This chain is Small ribosomal subunit protein bS16c, found in Chara vulgaris (Common stonewort).